The chain runs to 397 residues: Argininosuccinate synthase (397 aa).

8–16 (AYSGGLDTS) is a binding site for ATP. An L-citrulline-binding site is contributed by tyrosine 87. ATP is bound at residue glycine 117. Threonine 119, asparagine 123, and aspartate 124 together coordinate L-aspartate. Asparagine 123 contributes to the L-citrulline binding site. L-citrulline is bound by residues arginine 127, serine 175, glutamate 259, and tyrosine 271.

Belongs to the argininosuccinate synthase family. Type 1 subfamily. As to quaternary structure, homotetramer.

Its subcellular location is the cytoplasm. The catalysed reaction is L-citrulline + L-aspartate + ATP = 2-(N(omega)-L-arginino)succinate + AMP + diphosphate + H(+). It participates in amino-acid biosynthesis; L-arginine biosynthesis; L-arginine from L-ornithine and carbamoyl phosphate: step 2/3. The sequence is that of Argininosuccinate synthase from Streptomyces griseus subsp. griseus (strain JCM 4626 / CBS 651.72 / NBRC 13350 / KCC S-0626 / ISP 5235).